Consider the following 336-residue polypeptide: WAT1-related protein At2g37450 (336 aa).

Transmembrane regions (helical) follow at residues 7 to 27 (ALPFILMVLLQIGYAGMDILT), 45 to 65 (HGVATVVMAPFAFYFDNPVIA), 79 to 99 (TFAIALYNTLPAVTFILALIF), 115 to 135 (VVGTVTTVGGIMVMTLVKGPA), 160 to 180 (GAVLVTIGCFSYACFMILQAI), 189 to 209 (LSLATWICLIGTIEGVVVALV), 227 to 247 (LTITYSGIVCSALGYYIGGVV), 255 to 275 (FVTAFKPLCMIVVAIMSSIIF), and 279 to 299 (MYLGRALGATVICVGLYLVIW). EamA domains lie at 63–126 (VIAQ…GGIM) and 169–298 (FSYA…YLVI).

This sequence belongs to the drug/metabolite transporter (DMT) superfamily. Plant drug/metabolite exporter (P-DME) (TC 2.A.7.4) family.

Its subcellular location is the membrane. The sequence is that of WAT1-related protein At2g37450 from Arabidopsis thaliana (Mouse-ear cress).